The following is a 331-amino-acid chain: Phospho-N-acetylmuramoyl-pentapeptide-transferase (331 aa).

Helical transmembrane passes span 7–27 (IIYT…LTIP), 54–74 (TIGG…SGLI), 78–98 (LWIA…DDFI), 106–126 (LGLR…ILAI), 133–153 (IMGT…AGFT), 154–174 (ITQT…VVVA), 195–215 (IIAA…LAIF), 249–269 (AIAT…VGGI), and 311–331 (VVIV…LALS).

Belongs to the glycosyltransferase 4 family. MraY subfamily. The cofactor is Mg(2+).

Its subcellular location is the cell membrane. It catalyses the reaction UDP-N-acetyl-alpha-D-muramoyl-L-alanyl-gamma-D-glutamyl-meso-2,6-diaminopimeloyl-D-alanyl-D-alanine + di-trans,octa-cis-undecaprenyl phosphate = di-trans,octa-cis-undecaprenyl diphospho-N-acetyl-alpha-D-muramoyl-L-alanyl-D-glutamyl-meso-2,6-diaminopimeloyl-D-alanyl-D-alanine + UMP. It participates in cell wall biogenesis; peptidoglycan biosynthesis. In terms of biological role, catalyzes the initial step of the lipid cycle reactions in the biosynthesis of the cell wall peptidoglycan: transfers peptidoglycan precursor phospho-MurNAc-pentapeptide from UDP-MurNAc-pentapeptide onto the lipid carrier undecaprenyl phosphate, yielding undecaprenyl-pyrophosphoryl-MurNAc-pentapeptide, known as lipid I. The protein is Phospho-N-acetylmuramoyl-pentapeptide-transferase of Alkaliphilus metalliredigens (strain QYMF).